Here is a 407-residue protein sequence, read N- to C-terminus: Zinc finger protein 552 (407 aa).

The 77-residue stretch at Val14–Ala90 folds into the KRAB domain. The segment at His91 to His113 adopts a C2H2-type 1 zinc-finger fold. Residues His119–His141 form a C2H2-type 2; degenerate zinc finger. Residues Lys176 and Lys198 each participate in a glycyl lysine isopeptide (Lys-Gly) (interchain with G-Cter in SUMO2) cross-link. The segment at Tyr212–Leu234 adopts a C2H2-type 3; degenerate zinc-finger fold. The C2H2-type 4; degenerate zinc finger occupies Glu244 to His262. Residues Lys251 and Lys266 each participate in a glycyl lysine isopeptide (Lys-Gly) (interchain with G-Cter in SUMO2) cross-link. C2H2-type zinc fingers lie at residues Tyr268–His290, Tyr296–His318, Tyr324–His346, Tyr352–His374, and Tyr380–His402. Lys308 is covalently cross-linked (Glycyl lysine isopeptide (Lys-Gly) (interchain with G-Cter in SUMO2)).

Belongs to the krueppel C2H2-type zinc-finger protein family.

It is found in the nucleus. In terms of biological role, may be involved in transcriptional regulation. The chain is Zinc finger protein 552 (ZNF552) from Homo sapiens (Human).